We begin with the raw amino-acid sequence, 493 residues long: Amphoterin-induced protein 1 (493 aa).

A signal peptide spans 1-27; that stretch reads MHPHRDPRGLWLLLPSLSLLLFEVARA. Residues 28–61 form the LRRNT domain; sequence GRAVVSCPAACLCASNILSCSKQQLPNVPHSLPS. The Extracellular segment spans residues 28–372; it reads GRAVVSCPAA…LHGHHDTLNT (345 aa). 2 disulfides stabilise this stretch: cysteine 34–cysteine 40 and cysteine 38–cysteine 47. 6 LRR repeats span residues 62 to 83, 87 to 108, 111 to 132, 135 to 156, 159 to 179, and 186 to 206; these read YTAL…WTPT, QLHS…AFSP, NLRY…LFSD, VLEV…AFDD, QLQK…ELVK, and KLTL…PDLQ. Asparagine 72 carries an N-linked (GlcNAc...) asparagine glycan. The LRRCT domain maps to 221-272; sequence NPLNCDCELYQLFSHWQYRQLSSVMDFQEDLYCMNSKKLHNVFNLSFLNCGE. 3 disulfide bridges follow: cysteine 225–cysteine 253, cysteine 227–cysteine 270, and cysteine 290–cysteine 341. Residues asparagine 264, asparagine 315, asparagine 349, and asparagine 360 are each glycosylated (N-linked (GlcNAc...) asparagine). The Ig-like C2-type domain occupies 269-353; it reads NCGEYKERAW…MGETFNETLS (85 aa). The chain crosses the membrane as a helical span at residues 373–393; that stretch reads AYTTLVGCILSVVLVLIYLYL. Residues 394 to 493 are Cytoplasmic-facing; sequence TPCRCWCRGV…SVFSDTPIVV (100 aa). Residues 405–493 form a disordered region; that stretch reads KPSSHQGDSL…SVFSDTPIVV (89 aa). Over residues 408–424 the composition is skewed to polar residues; it reads SHQGDSLSSSMLSTTPN. Residues 431-442 are compositionally biased toward basic and acidic residues; the sequence is GDKDDGFDRRVA. Phosphoserine occurs at positions 477 and 481.

The protein belongs to the immunoglobulin superfamily. AMIGO family. In terms of assembly, homodimer, and heterodimer with AMIGO2 and AMIGO3. Interacts with KCNB1.

Its subcellular location is the cell membrane. The protein localises to the perikaryon. The protein resides in the cell projection. It is found in the dendrite. It localises to the axon. In terms of biological role, promotes growth and fasciculation of neurites from cultured hippocampal neurons. May be involved in fasciculation as well as myelination of developing neural axons. May have a role in regeneration as well as neural plasticity in the adult nervous system. May mediate homophilic as well as heterophilic cell-cell interaction and contribute to signal transduction through its intracellular domain. Assembled with KCNB1 modulates the gating characteristics of the delayed rectifier voltage-dependent potassium channel KCNB1. The polypeptide is Amphoterin-induced protein 1 (Homo sapiens (Human)).